Consider the following 512-residue polypeptide: Cytochrome P450 monooxygenase cheE (512 aa).

A helical transmembrane segment spans residues 5–27; sequence YFAAESSWSPYVILVLALAAMVA. N-linked (GlcNAc...) asparagine glycosylation is found at Asn53, Asn124, and Asn168. Residue Cys455 participates in heme binding. 2 N-linked (GlcNAc...) asparagine glycosylation sites follow: Asn499 and Asn508.

It belongs to the cytochrome P450 family. Heme serves as cofactor.

It is found in the membrane. It functions in the pathway secondary metabolite biosynthesis. In terms of biological role, cytochrome P450 monooxygenase; part of the gene cluster that mediates the biosynthesis of chaetoglobosin A which has a unique inhibitory activity against actin polymerization in mammalian cells. Chaetoglobosin A and its intermediates are involved in the morphological differentiation of C.globosum. The first step of the pathway is the synthesis of prochaetoglobosin I via condensation of one acetyl-CoA, 8 malonyl-CoA, and a L-tryptophan molecule by the PKS-NRPS hybrid synthetase cheA, followed by reduction of backbone double bond to install desired geometry by the enoyl reductase cheB. Further multiple oxidation steps performed by the cytochrome P450 monooxygenases cheE and cheG, as well as by the FAD-linked oxidoreductase cheF, lead to the formation of chaetoglobosin A. Depending on the order of action of these reductases, distinct intermediates can be identified. Within the pathway, the cytochrome P450 monooxygenase cheE catalyzes a stereospecific epoxidation on prochaetoglobosin I, cytoglobosin D, and chaetoglobosin J intermediates. The FAD-linked oxidoreductase cheF performs dehydrogenation of the C-20 hydroxyl groups in the 20-dihyrochaetoglobosin A and cytoglobosin D intermediates. Finally, the cytochrome P450 monooxygenase cheG can catalyze the stereospecific dihydroxylation of prochaetoglobosin I and prochaetoglobosin IV at C-19 and C-20, respectively. The Diels-Alderase cheD may play a role in the post-PKS-NRPS biosynthetic steps catalyzing Diels-Alder cyclization. This Chaetomium globosum (strain ATCC 6205 / CBS 148.51 / DSM 1962 / NBRC 6347 / NRRL 1970) (Soil fungus) protein is Cytochrome P450 monooxygenase cheE.